The primary structure comprises 418 residues: Glutamyl-tRNA reductase (418 aa).

Substrate contacts are provided by residues 51-54 (TCNR), S107, 112-114 (EPQ), and Q118. The active-site Nucleophile is the C52. An NADP(+)-binding site is contributed by 187-192 (GAGETA).

Belongs to the glutamyl-tRNA reductase family. Homodimer.

It carries out the reaction (S)-4-amino-5-oxopentanoate + tRNA(Glu) + NADP(+) = L-glutamyl-tRNA(Glu) + NADPH + H(+). It functions in the pathway porphyrin-containing compound metabolism; protoporphyrin-IX biosynthesis; 5-aminolevulinate from L-glutamyl-tRNA(Glu): step 1/2. Functionally, catalyzes the NADPH-dependent reduction of glutamyl-tRNA(Glu) to glutamate 1-semialdehyde (GSA). This Dichelobacter nodosus (strain VCS1703A) protein is Glutamyl-tRNA reductase.